Consider the following 145-residue polypeptide: MLMPKRVKHRKVQRGRMKGVATRGNKVVHGDYGLQALEPAWITSNQIEAARIAMTRFIKRGGKVWIKIFPDKPVTKKPAETRMGSGKGSPEYWVAVVKPGRVLFEIAGVSEEVAREALRLAMHKLPIKCKFVAREDEMGGEANES.

Over residues Met1 to Met17 the composition is skewed to basic residues. Positions Met1–Val20 are disordered.

The protein belongs to the universal ribosomal protein uL16 family. Part of the 50S ribosomal subunit.

Binds 23S rRNA and is also seen to make contacts with the A and possibly P site tRNAs. The sequence is that of Large ribosomal subunit protein uL16 from Acetivibrio thermocellus (strain ATCC 27405 / DSM 1237 / JCM 9322 / NBRC 103400 / NCIMB 10682 / NRRL B-4536 / VPI 7372) (Clostridium thermocellum).